The following is a 170-amino-acid chain: Penton capsid protein P1 (170 aa).

Residues 1-25 form a disordered region; it reads MVETTQHFVSIESSNRPDPANTTPA. 4 N-linked (Glc...) asparagine; by host glycosylation sites follow: Asn-21, Asn-93, Asn-129, and Asn-137.

Glycosylated. The pattern of glycosylation sites are unusual.

It is found in the virion. Its function is as follows. Constitutes the 12 pentameric capsomers positioned at the 5-fold vertices of the outer capsid shell. One of the vertex is composed of a variant of P1 (type II pentameric capsomer) and has thereby a structure slightly different from the other verteces (type I pentameric capsomers). The polypeptide is Penton capsid protein P1 (Paramecium bursaria Chlorella virus 1 (PBCV-1)).